The chain runs to 382 residues: Fimbrial usher domain-containing protein YdeT (382 aa).

The chain is Fimbrial usher domain-containing protein YdeT (ydeT) from Escherichia coli O157:H7.